The primary structure comprises 322 residues: Daunorubicin resistance ATP-binding protein DrrA2 (322 aa).

In terms of domain architecture, ABC transporter spans 6-236; it reads VRAEAMEKRY…VGGDRIEVVV (231 aa). 38–45 provides a ligand contact to ATP; sequence GPNGAGKT.

The protein belongs to the ABC transporter superfamily. Drug exporter-1 (DrugE1) (TC 3.A.1.105) family. In terms of assembly, the complex is probably composed of two ATP-binding proteins (DrrA2) and two transmembrane proteins (DrrB2).

It is found in the cell membrane. The enzyme catalyses daunorubicin(in) + ATP + H2O = daunorubicin(out) + ADP + phosphate + H(+). Functionally, part of the ABC transporter complex DrrA2B2 involved in daunorubicin efflux. Responsible for energy coupling to the transport system. Confers self-resistance to daunorubicin, an antibiotic produced by S.coeruleorubidus. This chain is Daunorubicin resistance ATP-binding protein DrrA2, found in Streptomyces coeruleorubidus.